The following is a 263-amino-acid chain: Triosephosphate isomerase (263 aa).

Residue 10–12 participates in substrate binding; sequence NWK. His-104 (electrophile) is an active-site residue. The active-site Proton acceptor is Glu-176. Residues Gly-182, Ser-221, and 242–243 each bind substrate; that span reads GG.

It belongs to the triosephosphate isomerase family. As to quaternary structure, homodimer.

The protein resides in the cytoplasm. It carries out the reaction D-glyceraldehyde 3-phosphate = dihydroxyacetone phosphate. It functions in the pathway carbohydrate biosynthesis; gluconeogenesis. The protein operates within carbohydrate degradation; glycolysis; D-glyceraldehyde 3-phosphate from glycerone phosphate: step 1/1. Functionally, involved in the gluconeogenesis. Catalyzes stereospecifically the conversion of dihydroxyacetone phosphate (DHAP) to D-glyceraldehyde-3-phosphate (G3P). The sequence is that of Triosephosphate isomerase from Haemophilus influenzae (strain 86-028NP).